A 455-amino-acid polypeptide reads, in one-letter code: MSLDIVILAAGQGTRMRSALPKVLHPVAGNSMLGHVIHSARQLQPQGIHVVIGHGAELVRERLAADDLNFVMQNKQLGTGHAVAQALPALTADTVLVLYGDVPLIEVETLQRLLAKANDQQLGLLTVTLDDPTGYGRIVRDEQGRVTAIVEHKDANDAQKAIKEGNTGILALPAARLADWMGRLSNNNAQGEYYLTDVIAMAVADGLVVATEQPHDAMEVQGANDRRQLSELERHYQLREGRRLMAQGVTLRDPARFDVRGEVSVGRDVLIDINVILEGKVVIEDDVQIGPNCVIKNTTLRKGAVVKANSHLEGAVMGEGSDAGPFARLRPGSVLDAKAHVGNFVELKNAHLGEGAKAGHLTYLGDAEIGARTNIGAGTITCNYDGANKFKTVMGEDVFIGSNNSLVAPVEIKAGATTAAGSTITQAVEAGDLAVARARQRNISGWKRPEKIKKS.

The interval 1–226 is pyrophosphorylase; that stretch reads MSLDIVILAA…AMEVQGANDR (226 aa). UDP-N-acetyl-alpha-D-glucosamine-binding positions include 8–11, Lys-22, Gln-73, 78–79, 99–101, Gly-136, Glu-151, Asn-166, and Asn-224; these read LAAG, GT, and YGD. Asp-101 contacts Mg(2+). Residue Asn-224 participates in Mg(2+) binding. The segment at 227–247 is linker; the sequence is RQLSELERHYQLREGRRLMAQ. The segment at 248–455 is N-acetyltransferase; it reads GVTLRDPARF…WKRPEKIKKS (208 aa). The UDP-N-acetyl-alpha-D-glucosamine site is built by Arg-330 and Lys-348. His-360 acts as the Proton acceptor in catalysis. UDP-N-acetyl-alpha-D-glucosamine contacts are provided by Tyr-363 and Asn-374. Acetyl-CoA is bound by residues Ala-377, 383–384, Ser-402, Ala-420, and Arg-437; that span reads NY.

The protein in the N-terminal section; belongs to the N-acetylglucosamine-1-phosphate uridyltransferase family. This sequence in the C-terminal section; belongs to the transferase hexapeptide repeat family. Homotrimer. Requires Mg(2+) as cofactor.

The protein resides in the cytoplasm. The enzyme catalyses alpha-D-glucosamine 1-phosphate + acetyl-CoA = N-acetyl-alpha-D-glucosamine 1-phosphate + CoA + H(+). It carries out the reaction N-acetyl-alpha-D-glucosamine 1-phosphate + UTP + H(+) = UDP-N-acetyl-alpha-D-glucosamine + diphosphate. It participates in nucleotide-sugar biosynthesis; UDP-N-acetyl-alpha-D-glucosamine biosynthesis; N-acetyl-alpha-D-glucosamine 1-phosphate from alpha-D-glucosamine 6-phosphate (route II): step 2/2. It functions in the pathway nucleotide-sugar biosynthesis; UDP-N-acetyl-alpha-D-glucosamine biosynthesis; UDP-N-acetyl-alpha-D-glucosamine from N-acetyl-alpha-D-glucosamine 1-phosphate: step 1/1. The protein operates within bacterial outer membrane biogenesis; LPS lipid A biosynthesis. In terms of biological role, catalyzes the last two sequential reactions in the de novo biosynthetic pathway for UDP-N-acetylglucosamine (UDP-GlcNAc). The C-terminal domain catalyzes the transfer of acetyl group from acetyl coenzyme A to glucosamine-1-phosphate (GlcN-1-P) to produce N-acetylglucosamine-1-phosphate (GlcNAc-1-P), which is converted into UDP-GlcNAc by the transfer of uridine 5-monophosphate (from uridine 5-triphosphate), a reaction catalyzed by the N-terminal domain. The chain is Bifunctional protein GlmU from Pseudomonas putida (strain ATCC 700007 / DSM 6899 / JCM 31910 / BCRC 17059 / LMG 24140 / F1).